Consider the following 602-residue polypeptide: Elongation factor 4 (602 aa).

Residues 6–188 form the tr-type G domain; sequence KYIRNFCIIA…AIIRRVPPPR (183 aa). GTP contacts are provided by residues 18–23 and 135–138; these read DHGKST and NKID.

Belongs to the TRAFAC class translation factor GTPase superfamily. Classic translation factor GTPase family. LepA subfamily.

The protein localises to the cell membrane. It carries out the reaction GTP + H2O = GDP + phosphate + H(+). In terms of biological role, required for accurate and efficient protein synthesis under certain stress conditions. May act as a fidelity factor of the translation reaction, by catalyzing a one-codon backward translocation of tRNAs on improperly translocated ribosomes. Back-translocation proceeds from a post-translocation (POST) complex to a pre-translocation (PRE) complex, thus giving elongation factor G a second chance to translocate the tRNAs correctly. Binds to ribosomes in a GTP-dependent manner. This chain is Elongation factor 4, found in Moorella thermoacetica (strain ATCC 39073 / JCM 9320).